The sequence spans 211 residues: Thiamine-phosphate synthase (211 aa).

Residues 39–41 (QLR) and asparagine 71 each bind 4-amino-2-methyl-5-(diphosphooxymethyl)pyrimidine. Mg(2+) contacts are provided by aspartate 72 and aspartate 91. Residue serine 110 participates in 4-amino-2-methyl-5-(diphosphooxymethyl)pyrimidine binding. 136–138 (TGT) is a 2-[(2R,5Z)-2-carboxy-4-methylthiazol-5(2H)-ylidene]ethyl phosphate binding site. Lysine 139 is a binding site for 4-amino-2-methyl-5-(diphosphooxymethyl)pyrimidine. 2-[(2R,5Z)-2-carboxy-4-methylthiazol-5(2H)-ylidene]ethyl phosphate-binding positions include glycine 167 and 187-188 (VS).

Belongs to the thiamine-phosphate synthase family. Mg(2+) is required as a cofactor.

It catalyses the reaction 2-[(2R,5Z)-2-carboxy-4-methylthiazol-5(2H)-ylidene]ethyl phosphate + 4-amino-2-methyl-5-(diphosphooxymethyl)pyrimidine + 2 H(+) = thiamine phosphate + CO2 + diphosphate. The enzyme catalyses 2-(2-carboxy-4-methylthiazol-5-yl)ethyl phosphate + 4-amino-2-methyl-5-(diphosphooxymethyl)pyrimidine + 2 H(+) = thiamine phosphate + CO2 + diphosphate. It carries out the reaction 4-methyl-5-(2-phosphooxyethyl)-thiazole + 4-amino-2-methyl-5-(diphosphooxymethyl)pyrimidine + H(+) = thiamine phosphate + diphosphate. It functions in the pathway cofactor biosynthesis; thiamine diphosphate biosynthesis; thiamine phosphate from 4-amino-2-methyl-5-diphosphomethylpyrimidine and 4-methyl-5-(2-phosphoethyl)-thiazole: step 1/1. Condenses 4-methyl-5-(beta-hydroxyethyl)thiazole monophosphate (THZ-P) and 2-methyl-4-amino-5-hydroxymethyl pyrimidine pyrophosphate (HMP-PP) to form thiamine monophosphate (TMP). The sequence is that of Thiamine-phosphate synthase from Xanthobacter autotrophicus (strain ATCC BAA-1158 / Py2).